The sequence spans 1100 residues: Sorbin and SH3 domain-containing protein 2 (1100 aa).

Phosphoserine is present on residues Tyr-13, Ser-14, His-27, Gly-28, Ser-30, and Ser-43. Over residues 30 to 52 (SLDSTDTYPQHAQSLDGTTSSSI) the composition is skewed to polar residues. The interval 30 to 57 (SLDSTDTYPQHAQSLDGTTSSSIPLYRS) is disordered. Positions 66–127 (VIKAPHYPGI…YNTPYTYNAG (62 aa)) constitute a SoHo domain. Polar residues predominate over residues 134–147 (SAQSHPAAKTQTYR). Residues 134–311 (SAQSHPAAKT…SPSRAKGGDD (178 aa)) are disordered. Position 153 is an alanine amide (His-153). Phosphoserine occurs at positions 154 and 157. Pro residues predominate over residues 167–180 (PVPPPHVPPPVPPL). Positions 181–217 (RPRDRSSTEKHDWDPPDRKVDTRKFRSEPRSIFEYEP) are enriched in basic and acidic residues. A phosphothreonine mark is found at Ser-234 and Ile-236. 6 positions are modified to phosphoserine: Ser-239, Ser-245, Ser-248, Lys-258, Ser-259, and Glu-260. Residues Thr-277, Gly-280, and Val-282 each carry the phosphothreonine modification. Residue Ser-287 is modified to Phosphoserine. Low complexity predominate over residues 287-304 (SSTTLTKSFTSSSPSSPS). Position 292 is a phosphothreonine (Thr-292). Residues Phe-295, Ser-297, Ser-298, Ser-299, Ser-301, Ser-302, Ser-304, Ala-306, Asp-311, and Pro-316 each carry the phosphoserine modification. Phosphothreonine occurs at positions 320, 322, and 326. Phosphoserine occurs at positions 341, 344, and 346. At Glu-366 the chain carries Phosphothreonine. Phosphoserine is present on residues Ser-381 and Ser-383. Asp-413 and Lys-415 each carry phosphothreonine. A phosphoserine mark is found at Arg-437 and Arg-439. Position 459 is a phosphothreonine (Ile-459). A phosphoserine mark is found at Lys-474, Ser-494, Ser-497, Ser-550, and Ser-750. Positions 807–866 (RMPRSASFQDVDTANSSCHHQDRGGALQDRESPRSYSSTLTDMGRSAPRERRGTPEKEKL) are disordered. Positions 812 to 824 (ASFQDVDTANSSC) are enriched in polar residues. Residues 825-839 (HHQDRGGALQDRESP) are compositionally biased toward basic and acidic residues. Position 843 is a phosphoserine (Ser-843). The span at 853–866 (APRERRGTPEKEKL) shows a compositional bias: basic and acidic residues. SH3 domains follow at residues 863-922 (KEKL…KLTP) and 938-999 (GEIG…VVKK). Ser-1017 and Ser-1023 each carry phosphoserine. In terms of domain architecture, SH3 3 spans 1041–1100 (GGGEPFQALYNYTPRNEDELELRESDVIDVMEKCDDGWFVGTSRRTKFFGTFPGNYVKRL).

Interacts with ABL, CBL, DNM1, DNM2, FLOT1, AFDN, PTK2B/PYK2, SAPAP, SPTAN1, SYNJ1, SYNJ2, VCL/vinculin and WASF. Interacts with ABL1/c-Abl, ABL2/v-Abl/Arg, ACTN, CBL and PALLD. Interacts with PTPN12 and WASF1 via its SH3 domains; this interaction may mediate the partial PTPN12 and WASF1 translocation to focal adhesion sites. Post-translationally, ubiquitinated by CBL. In terms of processing, dephosphorylated by PTPN12. Abundantly expressed in heart. In cardiac muscle cells, located in the Z-disks of sarcomere. Also found, but to a lower extent, in small and large intestine, pancreas, thymus, colon, spleen, prostate, testis, brain, ovary and epithelial cells. In the pancreas, mainly expressed in acinar cells, duct cells and all cell types in islets (at protein level). Tends to be down-regulated in pancreatic adenocarcinomas ans metastases.

Its subcellular location is the cytoplasm. It localises to the perinuclear region. The protein localises to the apical cell membrane. The protein resides in the cell junction. It is found in the focal adhesion. Its subcellular location is the cell projection. It localises to the lamellipodium. In terms of biological role, adapter protein that plays a role in the assembling of signaling complexes, being a link between ABL kinases and actin cytoskeleton. Can form complex with ABL1 and CBL, thus promoting ubiquitination and degradation of ABL1. May play a role in the regulation of pancreatic cell adhesion, possibly by acting on WASF1 phosphorylation, enhancing phosphorylation by ABL1, as well as dephosphorylation by PTPN12. Isoform 6 increases water and sodium absorption in the intestine and gall-bladder. This Homo sapiens (Human) protein is Sorbin and SH3 domain-containing protein 2 (SORBS2).